The following is a 170-amino-acid chain: Adenine phosphoribosyltransferase (170 aa).

It belongs to the purine/pyrimidine phosphoribosyltransferase family. Homodimer.

The protein resides in the cytoplasm. The catalysed reaction is AMP + diphosphate = 5-phospho-alpha-D-ribose 1-diphosphate + adenine. It participates in purine metabolism; AMP biosynthesis via salvage pathway; AMP from adenine: step 1/1. Catalyzes a salvage reaction resulting in the formation of AMP, that is energically less costly than de novo synthesis. This is Adenine phosphoribosyltransferase from Prochlorococcus marinus (strain MIT 9312).